We begin with the raw amino-acid sequence, 241 residues long: Terpene cyclase terB (241 aa).

Transmembrane regions (helical) follow at residues 19–39 (LADT…GAMI), 48–68 (YCMG…YTLV), 75–95 (VELA…FAAT), 114–134 (LIFL…AAEI), and 137–157 (ALAY…GGVC). N-linked (GlcNAc...) asparagine glycosylation is present at asparagine 163. 2 consecutive transmembrane segments (helical) span residues 169–189 (SVTL…FAFL) and 198–218 (FAWL…LADI).

It belongs to the paxB family.

The protein localises to the membrane. It participates in secondary metabolite biosynthesis. In terms of biological role, terpene cyclase; part of the gene cluster that mediates the biosynthesis of terpendoles, indole-diterpene (IDT) mycotoxins including terpendole I, terpendole K, terpendole C, as well as the kinesin Eg5 inhibitor terpendole E. Terpendoles biosynthesis begins with the synthesis of geranylgeranyl diphosphate (GGPP) by a yet unidentified GGPP synthase. Condensation of indole-3-glycerol phosphate with GGPP by the prenyltransferase terC then forms 3-geranylgeranylindole (3-GGI), followed by epoxidation and cyclization of this intermediate (by the FAD-dependent monooxygeanse terM and the terpene cyclase terB) to form paspaline. The cytochrome monooxygenase terQ then hydroxylates paspalline at C-11 to yield terpendole E. The cytochrome monooxygenase terP converts terpendole E to 13-desoxyterpendole I, and terQ converts 13-desoxyterpendole I into terpendole I. TerF and terK are required for conversion of terpendole I to terpendole C which is further converted to terpendole K. This chain is Terpene cyclase terB, found in Tolypocladium album (Soil fungus).